The chain runs to 381 residues: Regulatory protein RapF (381 aa).

Mn(2+) is bound by residues L40, M43, and E45. 6 TPR repeats span residues 101 to 137 (YYFN…VKDR), 148 to 181 (SESY…NIRL), 182 to 215 (LQCH…AEAE), 222 to 255 (GRTL…FEES), 262 to 295 (PQAY…SQKA), and 337 to 370 (EDFA…RQLI).

The protein belongs to the Rap family. Monomer. Is monomeric either alone or in complex with PhrF. Interacts specifically with the C-terminal DNA-binding domain of ComA. Interacts with PhrF.

Its subcellular location is the cytoplasm. With respect to regulation, inhibited by PhrF, which prevents RapF-ComA interaction. Interaction with PhrF induces a conformational change in RapF, which is propagated to the ComA binding site and causes the dissociation of ComA from RapF. Involved in the regulation of genetic competence development. Inhibits the activity of ComA, a transcriptional factor that regulates the development of genetic competence. Acts by binding to ComA, leading to the inhibition of its DNA-binding activity. May also affect transcription independently of ComA. The sequence is that of Regulatory protein RapF (rapF) from Bacillus subtilis (strain 168).